We begin with the raw amino-acid sequence, 716 residues long: Inhibitor of nuclear factor kappa-B kinase subunit epsilon (716 aa).

Residues 9–315 form the Protein kinase domain; that stretch reads WHTDDLLGQG…LQRVVVHVFS (307 aa). An ATP-binding site is contributed by 15–23; it reads LGQGATASV. Residue Lys30 forms a Glycyl lysine isopeptide (Lys-Gly) (interchain with G-Cter in ubiquitin) linkage. Lys38 serves as a coordination point for ATP. Asp135 (proton acceptor) is an active-site residue. A Phosphoserine; by autocatalysis and IKKB modification is found at Ser172. A Glycyl lysine isopeptide (Lys-Gly) (interchain with G-Cter in SUMO1) cross-link involves residue Lys231. Residues 383-647 form an interaction with DDX3X region; the sequence is STAIPKGLAF…VQESLSKLLE (265 aa). Lys401 participates in a covalent cross-link: Glycyl lysine isopeptide (Lys-Gly) (interchain with G-Cter in ubiquitin). The leucine-zipper stretch occupies residues 436 to 457; sequence QELMFRGLHWVMEVLQATCRRT. Thr501 is subject to Phosphothreonine. Phosphoserine is present on Ser664.

Belongs to the protein kinase superfamily. Ser/Thr protein kinase family. I-kappa-B kinase subfamily. Homodimer. Interacts with MAVS/IPS1. Interacts (via protein kinase domain) with TTLL12 (via N-terminus); the interaction prevents MAVS binding to IKBKE. Interacts with the adapter proteins AZI2/NAP1, TANK and TBKBP1/SINTBAD. Interacts with SIKE1. Interacts with TICAM1/TRIF, IRF3 and RIGI; interactions are disrupted by the interaction between IKBKE and SIKE1. Interacts with TOPORS; induced by DNA damage. Interacts with CYLD. Interacts (when polyubiquitinated) with IKBKB, IKBKG and MYD88. Interacts with IFIH1. Interacts with DDX3X; the interaction may be induced upon virus infection. Interacts with TRIM6 (via SPRY box). Interacts with unanchored K48-linked polyubiquitin chains; this leads to IKBKE activation. Interacts with TBK1. Interacts with FKBP5. In terms of assembly, (Microbial infection) Interacts (via Protein kinase domain) with arenavirus protein N; the interaction inhibits IKBKE kinase function. As to quaternary structure, (Microbial infection) Interacts with Ebola virus protein VP35; the interaction leads to inhibition of cellular antiviral response by blocking necessary interactions between the IKBKE and MAVS/IPS as well as its substrates IRF3 and IRF7. (Microbial infection) Interacts with Severe fever with thrombocytopenia virus (SFTSV) NSs; this interaction this interaction sequesters IKBKE in NSs-induced cytoplasmic inclusion bodies thereby inhibiting the IFN responses. In terms of assembly, (Microbial infection) Interacts with human T-cell leukemia virus 1/HTLV-1 protein HBZ. As to quaternary structure, (Microbial infection) Interacts with Epstein-Barr virus (EBV) protein NEC2/BFRF1; this interaction inhibits IKBKE kinase activity and IRF3 nuclear translocation. Autophosphorylated and phosphorylated by IKBKB/IKKB. Phosphorylation at Ser-172 is enhanced by the interaction with DDX3X. Phosphorylated at Thr-501 upon IFN activation. In terms of processing, sumoylation by TOPORS upon DNA damage is required for protection of cells against DNA damage-induced cell death. Desumoylated by SENP1. Post-translationally, 'Lys-63'-linked polyubiquitinated at Lys-30 and Lys-401 by TRAF2:BIRC2 and TRAF2:BIRC3 complexes. Ubiquitination is induced by LPS, TNFA and interleukin-1 and required for full kinase activity and KF-kappa-B pathway activation. In terms of tissue distribution, highly expressed in spleen followed by thymus, peripheral blood leukocytes, pancreas, placenta. Weakly expressed in lung, kidney, prostate, ovary and colon.

It localises to the cytoplasm. The protein resides in the nucleus. Its subcellular location is the PML body. It carries out the reaction L-seryl-[I-kappa-B protein] + ATP = O-phospho-L-seryl-[I-kappa-B protein] + ADP + H(+). In terms of biological role, serine/threonine kinase that plays an essential role in regulating inflammatory responses to viral infection, through the activation of the type I IFN, NF-kappa-B and STAT signaling. Also involved in TNFA and inflammatory cytokines, like Interleukin-1, signaling. Following activation of viral RNA sensors, such as RIG-I-like receptors, associates with DDX3X and phosphorylates interferon regulatory factors (IRFs), IRF3 and IRF7, as well as DDX3X. This activity allows subsequent homodimerization and nuclear translocation of the IRF3 leading to transcriptional activation of pro-inflammatory and antiviral genes including IFNB. In order to establish such an antiviral state, IKBKE forms several different complexes whose composition depends on the type of cell and cellular stimuli. Thus, several scaffolding molecules including IPS1/MAVS, TANK, AZI2/NAP1 or TBKBP1/SINTBAD can be recruited to the IKBKE-containing-complexes. Activated by polyubiquitination in response to TNFA and interleukin-1, regulates the NF-kappa-B signaling pathway through, at least, the phosphorylation of CYLD. Phosphorylates inhibitors of NF-kappa-B thus leading to the dissociation of the inhibitor/NF-kappa-B complex and ultimately the degradation of the inhibitor. In addition, is also required for the induction of a subset of ISGs which displays antiviral activity, may be through the phosphorylation of STAT1 at 'Ser-708'. Phosphorylation of STAT1 at 'Ser-708' also seems to promote the assembly and DNA binding of ISGF3 (STAT1:STAT2:IRF9) complexes compared to GAF (STAT1:STAT1) complexes, in this way regulating the balance between type I and type II IFN responses. Protects cells against DNA damage-induced cell death. Also plays an important role in energy balance regulation by sustaining a state of chronic, low-grade inflammation in obesity, wich leads to a negative impact on insulin sensitivity. Phosphorylates AKT1. This Homo sapiens (Human) protein is Inhibitor of nuclear factor kappa-B kinase subunit epsilon (IKBKE).